The sequence spans 296 residues: Acetylglutamate kinase (296 aa).

Residues 67–68 (GG), Arg-89, and Asn-194 contribute to the substrate site.

This sequence belongs to the acetylglutamate kinase family. ArgB subfamily.

Its subcellular location is the cytoplasm. It carries out the reaction N-acetyl-L-glutamate + ATP = N-acetyl-L-glutamyl 5-phosphate + ADP. The protein operates within amino-acid biosynthesis; L-arginine biosynthesis; N(2)-acetyl-L-ornithine from L-glutamate: step 2/4. Its function is as follows. Catalyzes the ATP-dependent phosphorylation of N-acetyl-L-glutamate. The protein is Acetylglutamate kinase of Syntrophus aciditrophicus (strain SB).